Reading from the N-terminus, the 654-residue chain is Interferon-induced GTP-binding protein Mx1 (654 aa).

M1 carries the post-translational modification N-acetylmethionine. 2 stretches are compositionally biased toward basic and acidic residues: residues 1 to 12 (MVLSDLDIKEPD) and 23 to 32 (DMVREHETES). The tract at residues 1 to 33 (MVLSDLDIKEPDSPESGLNGSDDMVREHETESK) is disordered. The region spanning 62 to 335 (DLALPAIAVI…LIMHICKTLP (274 aa)) is the Dynamin-type G domain. The G1 motif stretch occupies residues 72–79 (GDQSSGKS). 72–79 (GDQSSGKS) contributes to the GTP binding site. The G2 motif stretch occupies residues 97-99 (VTR). Positions 173 to 176 (DLPG) are G3 motif. GTP contacts are provided by residues 173-177 (DLPGI) and 242-245 (TKPD). The interval 242-245 (TKPD) is G4 motif. Residues 274 to 277 (KCRG) form a G5 motif region. Residues 336–361 (LLENQIKETHQRITEELQKYGKDIPE) are bundle signaling element (BSE). Residues 361-528 (EEESEKMFSL…HFQMEQLVYC (168 aa)) are middle domain. The segment at 362–624 (EESEKMFSLI…KDQYDWLLKE (263 aa)) is stalk. Residues 544–563 (EAEEEKKKKSNHYYQSEDSE) are disordered. The segment at 549–552 (KKKK) is critical for lipid-binding. One can recognise a GED domain in the interval 566–654 (TAEIFQHLMA…ARQRLAKFPG (89 aa)).

The protein belongs to the TRAFAC class dynamin-like GTPase superfamily. Dynamin/Fzo/YdjA family. In terms of assembly, homooligomer. Oligomerizes into multimeric filamentous or ring-like structures by virtue of its stalk domain. Oligomerization is critical for GTPase activity, protein stability, and recognition of viral target structures. Interacts with TRPC1, TRPC3, TRPC4, TRPC5, TRPC6 and TRPC7. Interacts with HSPA5. Interacts with DDX39A and DDX39B. Interacts with TUBB/TUBB5. ISGylated.

The protein resides in the cytoplasm. It localises to the endoplasmic reticulum membrane. It is found in the perinuclear region. Functionally, interferon-induced dynamin-like GTPase with antiviral activity. This Ovis aries (Sheep) protein is Interferon-induced GTP-binding protein Mx1 (MX1).